We begin with the raw amino-acid sequence, 216 residues long: Probable transaldolase (216 aa).

Lys83 functions as the Schiff-base intermediate with substrate in the catalytic mechanism.

It belongs to the transaldolase family. Type 3B subfamily.

It is found in the cytoplasm. It catalyses the reaction D-sedoheptulose 7-phosphate + D-glyceraldehyde 3-phosphate = D-erythrose 4-phosphate + beta-D-fructose 6-phosphate. It functions in the pathway carbohydrate degradation; pentose phosphate pathway; D-glyceraldehyde 3-phosphate and beta-D-fructose 6-phosphate from D-ribose 5-phosphate and D-xylulose 5-phosphate (non-oxidative stage): step 2/3. Functionally, transaldolase is important for the balance of metabolites in the pentose-phosphate pathway. This Methanococcus aeolicus (strain ATCC BAA-1280 / DSM 17508 / OCM 812 / Nankai-3) protein is Probable transaldolase.